Here is a 594-residue protein sequence, read N- to C-terminus: Cytoplasmic polyadenylation element-binding protein 2 (594 aa).

Residues 72–90 (KEREKVDEEKEGVERREEN) show a composition bias toward basic and acidic residues. Disordered stretches follow at residues 72-91 (KEREKVDEEKEGVERREENG) and 367-388 (GGGFNSGSGSGNGTKSDGSTSE). A compositionally biased stretch (gly residues) spans 367–378 (GGGFNSGSGSGN). In terms of domain architecture, RRM spans 458 to 540 (LVAFIGGVPR…KRVEIKPYFF (83 aa)).

Cytoplasmic polyadenylation element binding protein that binds to and regulates the translation of specific mRNAs. This Caenorhabditis japonica protein is Cytoplasmic polyadenylation element-binding protein 2 (cpb-2).